Consider the following 465-residue polypeptide: CUGBP Elav-like family member 3 (465 aa).

RRM domains follow at residues 7–88 (IKLF…PADS) and 95–174 (KLFV…FADT). Disordered regions lie at residues 283–311 (PVPTQPTGQPAPDALYPNGVHPYPAQSPA) and 345–379 (PPALVAQQPPPPPQQQQQQQQQQQQQQQQREGPDG). The span at 345 to 358 (PPALVAQQPPPPPQ) shows a compositional bias: pro residues. The span at 359-373 (QQQQQQQQQQQQQQQ) shows a compositional bias: low complexity. The 79-residue stretch at 380–458 (CNIFIYHLPQ…KRLKVQLKRP (79 aa)) folds into the RRM 3 domain.

Belongs to the CELF/BRUNOL family.

The protein localises to the nucleus. Its subcellular location is the cytoplasm. RNA-binding protein involved in the regulation of pre-mRNA alternative splicing. Mediates exon inclusion and/or exclusion in pre-mRNA that are subject to tissue-specific and developmentally regulated alternative splicing. Specifically activates exon 5 inclusion of cardiac isoforms of TNNT2 during heart remodeling at the juvenile to adult transition. Activates the splicing of MAPT/Tau exon 10. Binds to muscle-specific splicing enhancer (MSE) intronic sites flanking the alternative exon 5 of TNNT2 pre-mRNA. This is CUGBP Elav-like family member 3 (Celf3) from Mus musculus (Mouse).